Reading from the N-terminus, the 5146-residue chain is SCO-spondin (5146 aa).

The first 17 residues, 1 to 17 (MLLPALLFGAAWALANG), serve as a signal peptide directing secretion. The EMI domain occupies 18-94 (RWCEQTETVL…ACCPGWGGTH (77 aa)). Asparagine 80, asparagine 122, and asparagine 153 each carry an N-linked (GlcNAc...) asparagine glycan. Positions 185–356 (ATCATWSGFH…RLPDSELGCL (172 aa)) constitute a VWFD 1 domain. Cystine bridges form between cysteine 187/cysteine 317, cysteine 209/cysteine 355, and cysteine 231/cysteine 237. Asparagine 255 is a glycosylation site (N-linked (GlcNAc...) asparagine). Positions 464–519 (CPGGQLYSDCASACPPSCSAVGEGSEWSCGEECVSGCECPPGLFWDGALCVPAARC) constitute a TIL 1 domain. Residues 557 to 730 (AECAVGGDGH…FQVAGGGTCS (174 aa)) form the VWFD 2 domain. 2 disulfide bridges follow: cysteine 559/cysteine 692 and cysteine 583/cysteine 729. Asparagine 814 carries N-linked (GlcNAc...) asparagine glycosylation. A TIL 2 domain is found at 822-875 (CPGGQEYQECAPACDRNCGEPEDCGELDNCVAGCNCPLGLLWDPEGQCVPPNLC). An N-linked (GlcNAc...) asparagine glycan is attached at asparagine 906. In terms of domain architecture, VWFD 3 spans 1008–1178 (GRCRASGAPH…HSWRLGPLCP (171 aa)). Cystine bridges form between cysteine 1010-cysteine 1142, cysteine 1032-cysteine 1177, and cysteine 1053-cysteine 1060. The region spanning 1271–1327 (CERGQVYEACGPTCPATCHDHRPEPGWPCRAVACVEGCFCPEGTLLHGGVCLEPAAC) is the TIL 3 domain. N-linked (GlcNAc...) asparagine glycosylation is present at asparagine 1349. 6 LDL-receptor class A domains span residues 1372-1409 (GCAE…EGCA), 1412-1447 (VCGE…EQGC), 1448-1484 (PCPQ…ESCL), 1488-1526 (DCAP…GHCP), 1561-1597 (PCGP…SGCD), and 1599-1638 (PCAP…GACE). 18 cysteine pairs are disulfide-bonded: cysteine 1373–cysteine 1386, cysteine 1380–cysteine 1399, cysteine 1393–cysteine 1408, cysteine 1413–cysteine 1425, cysteine 1420–cysteine 1438, cysteine 1432–cysteine 1447, cysteine 1449–cysteine 1461, cysteine 1456–cysteine 1474, cysteine 1468–cysteine 1483, cysteine 1489–cysteine 1501, cysteine 1496–cysteine 1514, cysteine 1508–cysteine 1525, cysteine 1562–cysteine 1574, cysteine 1569–cysteine 1587, cysteine 1581–cysteine 1596, cysteine 1600–cysteine 1613, cysteine 1607–cysteine 1626, and cysteine 1620–cysteine 1637. The N-linked (GlcNAc...) asparagine glycan is linked to asparagine 1647. The 39-residue stretch at 1652-1690 (PCPEYSCPDGLCIGFQQVCDGQPDCELAGTAGPSPEEQG) folds into the LDL-receptor class A 7 domain. TSP type-1 domains lie at 1691 to 1745 (CGAW…AACP) and 1747 to 1805 (DGVW…DGCP). Cystine bridges form between cysteine 1703-cysteine 1739, cysteine 1707-cysteine 1744, and cysteine 1718-cysteine 1729. N-linked (GlcNAc...) asparagine glycosylation occurs at asparagine 1806. In terms of domain architecture, TIL 4 spans 1809-1865 (CSGELVFHACVPCPLTCDDISGQATCPPDRPCGGPGCWCPAGQVLGAQGRCVWPRQC). EGF-like domains follow at residues 1821–1860 (CPLT…GRCV) and 1861–1898 (WPRQ…RRCQ). In terms of domain architecture, TSP type-1 3 spans 1906 to 1962 (NCGWSAWSPWAECLGPCGSRSVQWSFRSPNNPRPAGRGHQCRGLHRKARRCQTEPCE). Cystine bridges form between cysteine 1907–cysteine 1946, cysteine 1918–cysteine 1922, and cysteine 1956–cysteine 1961. The VWFC 1 domain maps to 1962-2022 (EGCEQDGRVH…GVGESCCHCV (61 aa)). Asparagine 2027 and asparagine 2127 each carry an N-linked (GlcNAc...) asparagine glycan. Disulfide bonds link cysteine 2062–cysteine 2220, cysteine 2226–cysteine 2238, cysteine 2233–cysteine 2251, and cysteine 2245–cysteine 2260. The F5/8 type C domain maps to 2062 to 2220 (CYSPLGLARL…GPLRVELLGC (159 aa)). Positions 2225-2261 (LCLGVGHRCVSGECAPRGAPCDGVEDCKDGSDEEGCV) constitute an LDL-receptor class A 8 domain. The tract at residues 2262–2346 (TPPAGAGRIE…TPTSQPEAQA (85 aa)) is disordered. Composition is skewed to polar residues over residues 2273–2284 (TAWSSAPSSAQP) and 2331–2343 (GSVQ…SQPE). 2 LDL-receptor class A domains span residues 2382–2418 (QCSP…RPCA) and 2442–2478 (LCSP…NGCV). Intrachain disulfides connect cysteine 2383–cysteine 2395, cysteine 2390–cysteine 2408, cysteine 2402–cysteine 2417, cysteine 2443–cysteine 2455, cysteine 2450–cysteine 2468, cysteine 2462–cysteine 2477, cysteine 2480–cysteine 2516, cysteine 2491–cysteine 2495, cysteine 2526–cysteine 2531, cysteine 2546–cysteine 2583, cysteine 2550–cysteine 2588, and cysteine 2561–cysteine 2573. TSP type-1 domains are found at residues 2479–2532 (DCGL…QACP) and 2534–2589 (AGAW…QPCA). A TIL 5 domain is found at 2611-2654 (VPPCPPSCLDPEANRSCSGLCLEGCRCPPGLLLQDAGCLPLSEC). Asparagine 2624 and asparagine 2673 each carry an N-linked (GlcNAc...) asparagine glycan. TSP type-1 domains follow at residues 2694 to 2748 (PCGW…SACG), 2751 to 2807 (VPGW…PVCL), and 2809 to 2862 (LGVW…QPCT). Disulfide bonds link cysteine 2695/cysteine 2733, cysteine 2706/cysteine 2710, cysteine 2743/cysteine 2747, cysteine 2763/cysteine 2801, cysteine 2767/cysteine 2806, cysteine 2783/cysteine 2791, cysteine 2821/cysteine 2856, cysteine 2825/cysteine 2861, and cysteine 2836/cysteine 2846. Asparagine 2915 and asparagine 2946 each carry an N-linked (GlcNAc...) asparagine glycan. TSP type-1 domains follow at residues 2964-3019 (ACGW…RPCG) and 3020-3071 (GPAG…GVCP). 3 disulfide bridges follow: cysteine 2965/cysteine 3003, cysteine 2976/cysteine 2980, and cysteine 3013/cysteine 3018. N-linked (GlcNAc...) asparagine glycosylation occurs at asparagine 3041. The 53-residue stretch at 3070–3122 (CPPGKRWLDCAQGPASCAELSAPRGADQPCHPGCYCPSGMLLLNNACVPTQDC) folds into the TIL 6 domain. 2 N-linked (GlcNAc...) asparagine glycosylation sites follow: asparagine 3143 and asparagine 3153. TSP type-1 domains are found at residues 3163 to 3230 (QPTW…PECD) and 3232 to 3287 (AGGW…LPCP). 6 disulfide bridges follow: cysteine 3175/cysteine 3224, cysteine 3179/cysteine 3229, cysteine 3190/cysteine 3214, cysteine 3244/cysteine 3281, cysteine 3248/cysteine 3286, and cysteine 3259/cysteine 3271. A glycan (N-linked (GlcNAc...) asparagine) is linked at asparagine 3290. Residues 3295–3345 (EGAEYSACGPPCPRSCDDLVHCVWHCQPGCYCPPGQVLSADGTVHVQPGHC) form the TIL 7 domain. 2 TSP type-1 domains span residues 3388–3450 (PGAW…PECP) and 3452–3507 (DGAW…TQCT). Disulfide bonds link cysteine 3400–cysteine 3443, cysteine 3404–cysteine 3449, cysteine 3415–cysteine 3427, cysteine 3464–cysteine 3499, cysteine 3467–cysteine 3506, and cysteine 3477–cysteine 3489. 3 N-linked (GlcNAc...) asparagine glycosylation sites follow: asparagine 3502, asparagine 3580, and asparagine 3607. Residues 3626 to 3674 (LGLWGSWGPWEDCSVSCGGGEQLRFRRCPRPPCPGPARQSRTCRTQVCR) enclose the TSP type-1 15 domain. 3 disulfide bridges follow: cysteine 3638–cysteine 3668, cysteine 3642–cysteine 3673, and cysteine 3653–cysteine 3658. N-linked (GlcNAc...) asparagine glycosylation occurs at asparagine 3783. TSP type-1 domains follow at residues 3802–3858 (AGGF…PECP), 3872–3924 (PGGW…PSCT), 3938–3994 (NCSW…RACP), and 3996–4051 (PGGW…TPCE). 3 cysteine pairs are disulfide-bonded: cysteine 3814/cysteine 3852, cysteine 3818/cysteine 3857, and cysteine 3830/cysteine 3842. Asparagine 3906 and asparagine 3938 each carry an N-linked (GlcNAc...) asparagine glycan. Disulfide bonds link cysteine 3939-cysteine 3975, cysteine 3950-cysteine 3954, cysteine 3988-cysteine 3993, cysteine 4008-cysteine 4045, cysteine 4012-cysteine 4050, and cysteine 4023-cysteine 4035. The 56-residue stretch at 4054–4109 (CPAGMEVVSCANRCPRRCSDLQEGIVCQEDQACQQGCRCPEGSLEQDGGCVPLGHC) folds into the TIL 8 domain. The VWFC 2 domain maps to 4101–4168 (GGCVPLGHCE…AWSPCSRSCG (68 aa)). A glycan (N-linked (GlcNAc...) asparagine) is linked at asparagine 4131. TSP type-1 domains are found at residues 4151-4204 (HCAW…SPCP), 4245-4300 (LGAW…WPCP), 4302-4358 (LPDT…GPCL), and 4360-4414 (ECVW…GNCS). Intrachain disulfides connect cysteine 4152–cysteine 4188, cysteine 4163–cysteine 4167, cysteine 4198–cysteine 4203, cysteine 4257–cysteine 4294, cysteine 4261–cysteine 4299, and cysteine 4272–cysteine 4284. An N-linked (GlcNAc...) asparagine glycan is attached at asparagine 4341. 3 cysteine pairs are disulfide-bonded: cysteine 4361–cysteine 4398, cysteine 4372–cysteine 4374, and cysteine 4408–cysteine 4413. An N-linked (GlcNAc...) asparagine glycan is attached at asparagine 4412. The TIL 9 domain maps to 4418 to 4473 (CAPPFEFQACGSPCTGLCATYLSPWLCQDLPPCQPGCYCPEGLLEQAGGCVPPEQC). The TSP type-1 24 domain maps to 4610–4661 (LCQWGPWGAWSPCQVPCSGGFRLRWREAGIPPGGGCRGPWAQTESCNMGPCP). Intrachain disulfides connect cysteine 4611–cysteine 4645, cysteine 4622–cysteine 4626, and cysteine 4655–cysteine 4660. Residues 4675–4721 (DCANQCPRSCVDLWDRVECLQGPCRPGCRCPPGQLVQDGHCVPVSSC) form the TIL 10 domain. N-linked (GlcNAc...) asparagine glycans are attached at residues asparagine 4729, asparagine 4746, asparagine 4751, and asparagine 4772. In terms of domain architecture, TSP type-1 25 spans 4761-4814 (CPTLGPWSAWSNCSAPCGGGTTKRHRSCKEGPGVTPCQAQDMEQQQDCNLQPCP). 3 disulfide bridges follow: cysteine 4773-cysteine 4808, cysteine 4777-cysteine 4813, and cysteine 4788-cysteine 4797. Positions 4816–4870 (CPPGQVLSACAVSCPRLCSHLQPGTPCMQEPCQLGCDCPRGQLLHNGTCVPPAEC) constitute a TIL 11 domain. Asparagine 4861, asparagine 4901, asparagine 4947, and asparagine 4954 each carry an N-linked (GlcNAc...) asparagine glycan. Residues 4983 to 5041 (CECWHHGRPHPPGSEWQKACESCRCVSGESICTQHCPPLTCAQGETAVQEPGGCCPTCR) form the VWFC 3 domain. Disulfide bonds link cysteine 5052–cysteine 5100, cysteine 5066–cysteine 5117, cysteine 5076–cysteine 5133, and cysteine 5080–cysteine 5135. A CTCK domain is found at 5052–5139 (CRHLTELRNL…IHSCQCSACQ (88 aa)). N-linked (GlcNAc...) asparagine glycosylation is present at asparagine 5060.

This sequence belongs to the thrombospondin family. In terms of tissue distribution, subcommissural organ. Located at the boundary of the diencephalon and mesencephalon beneath the posterior commissure at the point where the axons cross the midline.

It localises to the secreted. It is found in the extracellular space. In terms of biological role, involved in the modulation of neuronal aggregation. May be involved in developmental events during the formation of the central nervous system. In Bos taurus (Bovine), this protein is SCO-spondin (SSPO).